The sequence spans 1399 residues: DNA-directed RNA polymerase subunit beta' (1399 aa).

Zn(2+) contacts are provided by C71, C73, C86, and C89. Residues D462, D464, and D466 each coordinate Mg(2+). C810, C884, C891, and C894 together coordinate Zn(2+). The disordered stretch occupies residues 1379-1399 (KQAAIVPSQPEPQPLALPPAE). Pro residues predominate over residues 1387 to 1399 (QPEPQPLALPPAE).

Belongs to the RNA polymerase beta' chain family. In terms of assembly, the RNAP catalytic core consists of 2 alpha, 1 beta, 1 beta' and 1 omega subunit. When a sigma factor is associated with the core the holoenzyme is formed, which can initiate transcription. Mg(2+) serves as cofactor. The cofactor is Zn(2+).

The catalysed reaction is RNA(n) + a ribonucleoside 5'-triphosphate = RNA(n+1) + diphosphate. DNA-dependent RNA polymerase catalyzes the transcription of DNA into RNA using the four ribonucleoside triphosphates as substrates. The protein is DNA-directed RNA polymerase subunit beta' of Bradyrhizobium sp. (strain BTAi1 / ATCC BAA-1182).